The following is a 453-amino-acid chain: Bifunctional protein GlmU (453 aa).

Positions 1–227 (MNKLSVVILA…LMEVEGVNNR (227 aa)) are pyrophosphorylase. UDP-N-acetyl-alpha-D-glucosamine-binding positions include 9-12 (LAAG), Lys23, Gln74, 79-80 (GT), 101-103 (YGD), Gly138, Glu152, Asn167, and Asn225. Asp103 serves as a coordination point for Mg(2+). Position 225 (Asn225) interacts with Mg(2+). The tract at residues 228 to 248 (LQLANLERHYQRKQVEKLLLA) is linker. The interval 249 to 453 (GVTFADPARF…ISNWQRPKRK (205 aa)) is N-acetyltransferase. UDP-N-acetyl-alpha-D-glucosamine is bound by residues Arg331 and Lys349. Residue His361 is the Proton acceptor of the active site. Positions 364 and 375 each coordinate UDP-N-acetyl-alpha-D-glucosamine. Residues Ala378, 384 to 385 (NY), Ser403, Ala421, and Arg438 each bind acetyl-CoA.

The protein in the N-terminal section; belongs to the N-acetylglucosamine-1-phosphate uridyltransferase family. This sequence in the C-terminal section; belongs to the transferase hexapeptide repeat family. In terms of assembly, homotrimer. The cofactor is Mg(2+).

It localises to the cytoplasm. It carries out the reaction alpha-D-glucosamine 1-phosphate + acetyl-CoA = N-acetyl-alpha-D-glucosamine 1-phosphate + CoA + H(+). The catalysed reaction is N-acetyl-alpha-D-glucosamine 1-phosphate + UTP + H(+) = UDP-N-acetyl-alpha-D-glucosamine + diphosphate. Its pathway is nucleotide-sugar biosynthesis; UDP-N-acetyl-alpha-D-glucosamine biosynthesis; N-acetyl-alpha-D-glucosamine 1-phosphate from alpha-D-glucosamine 6-phosphate (route II): step 2/2. It participates in nucleotide-sugar biosynthesis; UDP-N-acetyl-alpha-D-glucosamine biosynthesis; UDP-N-acetyl-alpha-D-glucosamine from N-acetyl-alpha-D-glucosamine 1-phosphate: step 1/1. It functions in the pathway bacterial outer membrane biogenesis; LPS lipid A biosynthesis. Catalyzes the last two sequential reactions in the de novo biosynthetic pathway for UDP-N-acetylglucosamine (UDP-GlcNAc). The C-terminal domain catalyzes the transfer of acetyl group from acetyl coenzyme A to glucosamine-1-phosphate (GlcN-1-P) to produce N-acetylglucosamine-1-phosphate (GlcNAc-1-P), which is converted into UDP-GlcNAc by the transfer of uridine 5-monophosphate (from uridine 5-triphosphate), a reaction catalyzed by the N-terminal domain. This chain is Bifunctional protein GlmU, found in Histophilus somni (strain 2336) (Haemophilus somnus).